The chain runs to 172 residues: Adenine phosphoribosyltransferase (172 aa).

This sequence belongs to the purine/pyrimidine phosphoribosyltransferase family. Homodimer.

The protein resides in the cytoplasm. The enzyme catalyses AMP + diphosphate = 5-phospho-alpha-D-ribose 1-diphosphate + adenine. It participates in purine metabolism; AMP biosynthesis via salvage pathway; AMP from adenine: step 1/1. Catalyzes a salvage reaction resulting in the formation of AMP, that is energically less costly than de novo synthesis. This chain is Adenine phosphoribosyltransferase, found in Anaeromyxobacter dehalogenans (strain 2CP-1 / ATCC BAA-258).